A 599-amino-acid polypeptide reads, in one-letter code: Sulfite reductase [NADPH] flavoprotein alpha-component (599 aa).

The Flavodoxin-like domain maps to 63–201 (ITVISASQTG…LATAWRKQVV (139 aa)). FMN is bound by residues 69 to 74 (SQTGNA), 116 to 119 (STQG), and 152 to 161 (LGDTSYENFC). The 215-residue stretch at 234–448 (EQPLTAQLAV…IEHNDNFRLP (215 aa)) folds into the FAD-binding FR-type domain. FAD-binding positions include Thr322, His356, 386–389 (RLYS), 404–406 (TVG), Tyr410, and 419–422 (GGAS). NADP(+)-binding positions include 519-520 (SR), 525-529 (KVYVQ), and Asp561. Tyr599 contributes to the FAD binding site.

Belongs to the NADPH-dependent sulphite reductase flavoprotein subunit CysJ family. It in the N-terminal section; belongs to the flavodoxin family. This sequence in the C-terminal section; belongs to the flavoprotein pyridine nucleotide cytochrome reductase family. In terms of assembly, alpha(8)-beta(8). The alpha component is a flavoprotein, the beta component is a hemoprotein. Requires FAD as cofactor. FMN serves as cofactor.

It catalyses the reaction hydrogen sulfide + 3 NADP(+) + 3 H2O = sulfite + 3 NADPH + 4 H(+). The protein operates within sulfur metabolism; hydrogen sulfide biosynthesis; hydrogen sulfide from sulfite (NADPH route): step 1/1. Its function is as follows. Component of the sulfite reductase complex that catalyzes the 6-electron reduction of sulfite to sulfide. This is one of several activities required for the biosynthesis of L-cysteine from sulfate. The flavoprotein component catalyzes the electron flow from NADPH -&gt; FAD -&gt; FMN to the hemoprotein component. The sequence is that of Sulfite reductase [NADPH] flavoprotein alpha-component from Serratia proteamaculans (strain 568).